A 55-amino-acid polypeptide reads, in one-letter code: Large ribosomal subunit protein bL32 (55 aa).

The span at 1-19 (MAVPKRRMSRANTHSRRSQ) shows a compositional bias: basic residues. Residues 1–20 (MAVPKRRMSRANTHSRRSQW) form a disordered region.

The protein belongs to the bacterial ribosomal protein bL32 family.

The chain is Large ribosomal subunit protein bL32 from Corynebacterium jeikeium (strain K411).